The chain runs to 348 residues: Putative agmatine deiminase (348 aa).

C335 acts as the Amidino-cysteine intermediate in catalysis.

This sequence belongs to the agmatine deiminase family.

It catalyses the reaction agmatine + H2O = N-carbamoylputrescine + NH4(+). The sequence is that of Putative agmatine deiminase from Legionella pneumophila subsp. pneumophila (strain Philadelphia 1 / ATCC 33152 / DSM 7513).